The primary structure comprises 322 residues: Sideroflexin-1 (322 aa).

The residue at position 2 (serine 2) is an N-acetylserine. Over serine 2–threonine 102 the chain is Mitochondrial matrix. The helical transmembrane segment at isoleucine 103–tryptophan 120 threads the bilayer. The Mitochondrial intermembrane portion of the chain corresponds to glutamine 121 to glutamate 146. The chain crosses the membrane as a helical span at residues leucine 147–alanine 167. Residues leucine 168 to proline 174 lie on the Mitochondrial matrix side of the membrane. The chain crosses the membrane as a helical span at residues leucine 175–leucine 195. At methionine 196–glutamine 228 the chain is on the mitochondrial intermembrane side. Residues valine 229–asparagine 249 form a helical membrane-spanning segment. Residues threonine 250–proline 266 lie on the Mitochondrial matrix side of the membrane. A helical membrane pass occupies residues valine 267 to phenylalanine 287. At proline 288–leucine 322 the chain is on the mitochondrial intermembrane side.

It belongs to the sideroflexin family.

It localises to the mitochondrion inner membrane. The enzyme catalyses L-serine(in) = L-serine(out). It catalyses the reaction L-alanine(in) = L-alanine(out). The catalysed reaction is L-cysteine(in) = L-cysteine(out). In terms of biological role, amino acid transporter importing serine, an essential substrate of the mitochondrial branch of the one-carbon pathway, into mitochondria. Mitochondrial serine is then converted to glycine and formate, which exits to the cytosol where it is used to generate the charged folates that serve as one-carbon donors. May also transport other amino acids including alanine and cysteine. The protein is Sideroflexin-1 (SFXN1) of Ovis aries (Sheep).